Reading from the N-terminus, the 280-residue chain is Large ribosomal subunit protein uL2 (280 aa).

A disordered region spans residues 213 to 280 (RWKGKRPSVR…RRRTGKKHAR (68 aa)). Positions 268–280 (IVRRRRTGKKHAR) are enriched in basic residues.

This sequence belongs to the universal ribosomal protein uL2 family. As to quaternary structure, part of the 50S ribosomal subunit. Forms a bridge to the 30S subunit in the 70S ribosome.

One of the primary rRNA binding proteins. Required for association of the 30S and 50S subunits to form the 70S ribosome, for tRNA binding and peptide bond formation. It has been suggested to have peptidyltransferase activity; this is somewhat controversial. Makes several contacts with the 16S rRNA in the 70S ribosome. In Mycobacterium leprae (strain Br4923), this protein is Large ribosomal subunit protein uL2.